The chain runs to 165 residues: Glutamyl-tRNA(Gln) amidotransferase subunit F, mitochondrial (165 aa).

The transit peptide at methionine 1–phenylalanine 19 directs the protein to the mitochondrion.

It belongs to the GatF family. As to quaternary structure, subunit of the heterotrimeric GatFAB amidotransferase (AdT) complex, composed of A, B and F subunits.

The protein localises to the mitochondrion inner membrane. The catalysed reaction is L-glutamyl-tRNA(Gln) + L-glutamine + ATP + H2O = L-glutaminyl-tRNA(Gln) + L-glutamate + ADP + phosphate + H(+). In terms of biological role, allows the formation of correctly charged Gln-tRNA(Gln) through the transamidation of misacylated Glu-tRNA(Gln) in the mitochondria. The reaction takes place in the presence of glutamine and ATP through an activated gamma-phospho-Glu-tRNA(Gln). Required for proper protein synthesis within the mitochondrion. The polypeptide is Glutamyl-tRNA(Gln) amidotransferase subunit F, mitochondrial (Candida albicans (strain SC5314 / ATCC MYA-2876) (Yeast)).